The chain runs to 613 residues: 8-methylmenaquinol:fumarate reductase flavoprotein subunit (613 aa).

A signal peptide (tat-type signal) is located at residues 1 to 33; sequence MSEQFTRREFLQSACITMGALAVSTSGVDRAFA. Residues 53-58, 78-93, and D255 each bind FAD; these read GSGAAG and SKVMPTRSATTMAEGG. The substrate site is built by H276 and T288. Catalysis depends on R319, which acts as the Proton acceptor. H387 contacts substrate. E413 contributes to the FAD binding site. Residue R424 coordinates substrate. 429–430 contacts FAD; sequence SL.

This sequence belongs to the FAD-dependent oxidoreductase 2 family. FRD/SDH subfamily. The MFR complex is composed of three subunits: a flavoprotein (SdhA), an iron-sulfur protein (SdhB), and one hydrophobic anchor protein (SdhE). Requires FAD as cofactor. Post-translationally, predicted to be exported by the Tat system. The position of the signal peptide cleavage has not been experimentally proven.

The protein resides in the periplasm. Its subcellular location is the cell membrane. The enzyme catalyses 8-methylmenaquinone-6 + succinate = 8-methylmenaquinol-6 + fumarate. In terms of biological role, flavoprotein subunit of 8-methylmenaquinol:fumarate reductase (MFR), that catalyzes the reduction of fumarate using 8-methylmenaquinol-6 as electron donor. The complex shows no succinate oxidation activity. Is involved in anaerobic metabolism. SdhA contains the dicarboxylate reduction site. The protein is 8-methylmenaquinol:fumarate reductase flavoprotein subunit of Wolinella succinogenes (strain ATCC 29543 / DSM 1740 / CCUG 13145 / JCM 31913 / LMG 7466 / NCTC 11488 / FDC 602W) (Vibrio succinogenes).